A 78-amino-acid polypeptide reads, in one-letter code: Sec-independent protein translocase protein TatA (78 aa).

The helical transmembrane segment at 1–21 (MFGRIGLPEILLILAIALIIF) threads the bilayer. Residues 50–78 (EVNEVEEEVKENKSSDVKENEDNKTEKST) form a disordered region. Residues 59–78 (KENKSSDVKENEDNKTEKST) show a composition bias toward basic and acidic residues.

This sequence belongs to the TatA/E family. In terms of assembly, forms a complex with TatC.

The protein localises to the cell membrane. Its function is as follows. Part of the twin-arginine translocation (Tat) system that transports large folded proteins containing a characteristic twin-arginine motif in their signal peptide across membranes. TatA could form the protein-conducting channel of the Tat system. In Natranaerobius thermophilus (strain ATCC BAA-1301 / DSM 18059 / JW/NM-WN-LF), this protein is Sec-independent protein translocase protein TatA.